The chain runs to 109 residues: Protein reprimo (109 aa).

N-linked (GlcNAc...) asparagine glycans are attached at residues Asn7 and Asn18. The helical transmembrane segment at 56–76 (VVQIAVMCVLSLTVVFGIFFL) threads the bilayer. Phosphoserine is present on Ser98.

Belongs to the reprimo family.

The protein localises to the cytoplasm. The protein resides in the membrane. Functionally, may be involved in the regulation of p53-dependent G2 arrest of the cell cycle. Seems to induce cell cycle arrest by inhibiting CDK1 activity and nuclear translocation of the CDC2 cyclin B1 complex. The protein is Protein reprimo (RPRM) of Bos taurus (Bovine).